Reading from the N-terminus, the 895-residue chain is Putative endoplasmic reticulum metallopeptidase 1-A (895 aa).

Positions Met-1–Arg-30 are disordered. At Met-1–Ser-34 the chain is on the cytoplasmic side. The span at Glu-10–Arg-30 shows a compositional bias: basic and acidic residues. Residues Ile-35–Val-55 form a helical membrane-spanning segment. The Lumenal segment spans residues Ala-56–Ser-383. Residues His-174 and Asp-186 each contribute to the Zn(2+) site. Glu-220 serves as the catalytic Proton acceptor. 3 residues coordinate Zn(2+): Glu-221, Glu-247, and His-323. Residues Val-384–Leu-404 form a helical membrane-spanning segment. Over Arg-405–His-423 the chain is Cytoplasmic. Residues Val-424–Met-444 traverse the membrane as a helical segment. Residues Asp-445–Lys-452 are Lumenal-facing. The helical transmembrane segment at Met-453–His-473 threads the bilayer. Over Ser-474 to Thr-492 the chain is Cytoplasmic. The chain crosses the membrane as a helical span at residues Ile-493–Phe-513. Residues Tyr-514–Asn-517 lie on the Lumenal side of the membrane. The helical transmembrane segment at Asn-518–Ile-538 threads the bilayer. The Cytoplasmic segment spans residues Arg-539–Arg-544. Residues Val-545–Ile-565 traverse the membrane as a helical segment. Topologically, residues Ser-566 to Glu-586 are lumenal. The helical transmembrane segment at Phe-587–Leu-607 threads the bilayer. At Phe-608–Arg-613 the chain is on the cytoplasmic side. The helical transmembrane segment at Met-614 to Thr-634 threads the bilayer. The Lumenal segment spans residues Thr-635–Phe-895. N-linked (GlcNAc...) asparagine glycans are attached at residues Asn-659, Asn-702, and Asn-758.

It belongs to the peptidase M28 family. The cofactor is Zn(2+).

The protein resides in the endoplasmic reticulum membrane. This is Putative endoplasmic reticulum metallopeptidase 1-A from Caenorhabditis elegans.